The following is a 142-amino-acid chain: Ovocleidin-17 (142 aa).

3 disulfides stabilise this stretch: C5–C16, C33–C138, and C113–C130. The C-type lectin domain maps to 12 to 139 (TPGGCLGFFS…CTERNAFVCK (128 aa)). N59 carries an N-linked (GlcNAc...) asparagine glycan. A phosphoserine mark is found at S61 and S67.

In terms of tissue distribution, expressed in the shell gland mucosa. Not detected in hen liver, magnum, isthmus, cartilage, bone or in egg white or yolk.

It is found in the secreted. The protein resides in the extracellular space. It localises to the extracellular matrix. In terms of biological role, may form proteinaceous networks during the construction of the eggshell which then may control the deposition of the mineral phase. The protein is Ovocleidin-17 of Gallus gallus (Chicken).